The chain runs to 357 residues: tRNA N6-adenosine threonylcarbamoyltransferase (357 aa).

Residues His113 and His117 each coordinate Fe cation. Substrate contacts are provided by residues 136–140 (LVSGG), Asp169, Gly182, and Asn288. Asp316 is a binding site for Fe cation.

This sequence belongs to the KAE1 / TsaD family. Fe(2+) is required as a cofactor.

It localises to the cytoplasm. The catalysed reaction is L-threonylcarbamoyladenylate + adenosine(37) in tRNA = N(6)-L-threonylcarbamoyladenosine(37) in tRNA + AMP + H(+). Its function is as follows. Required for the formation of a threonylcarbamoyl group on adenosine at position 37 (t(6)A37) in tRNAs that read codons beginning with adenine. Is involved in the transfer of the threonylcarbamoyl moiety of threonylcarbamoyl-AMP (TC-AMP) to the N6 group of A37, together with TsaE and TsaB. TsaD likely plays a direct catalytic role in this reaction. This Gemmatimonas aurantiaca (strain DSM 14586 / JCM 11422 / NBRC 100505 / T-27) protein is tRNA N6-adenosine threonylcarbamoyltransferase.